The primary structure comprises 457 residues: tRNA(Ile)-lysidine synthase (457 aa).

27–32 serves as a coordination point for ATP; the sequence is SGGLDS.

It belongs to the tRNA(Ile)-lysidine synthase family.

Its subcellular location is the cytoplasm. It carries out the reaction cytidine(34) in tRNA(Ile2) + L-lysine + ATP = lysidine(34) in tRNA(Ile2) + AMP + diphosphate + H(+). Its function is as follows. Ligates lysine onto the cytidine present at position 34 of the AUA codon-specific tRNA(Ile) that contains the anticodon CAU, in an ATP-dependent manner. Cytidine is converted to lysidine, thus changing the amino acid specificity of the tRNA from methionine to isoleucine. The sequence is that of tRNA(Ile)-lysidine synthase from Hamiltonella defensa subsp. Acyrthosiphon pisum (strain 5AT).